A 1267-amino-acid polypeptide reads, in one-letter code: Probable ATP-dependent RNA helicase DHR1 (1267 aa).

Disordered stretches follow at residues 1–67 (MGTY…EPLT), 168–233 (YEPK…SNIK), and 255–313 (EELK…DQND). 2 stretches are compositionally biased toward basic and acidic residues: residues 7–25 (RFNE…ELKR) and 32–43 (TRQDENDERVEN). Acidic residues predominate over residues 175-192 (EYGEGGSSEDDDGEDDFE). Ser181 is subject to Phosphoserine. Residues 202 to 217 (TDNEEKKSSGFIDHRP) are compositionally biased toward basic and acidic residues. Positions 264–284 (DEMDFDTTSEDDDEEEDQEEE) are enriched in acidic residues. The Helicase ATP-binding domain occupies 401-580 (MEAIHHNDVV…KTLFPIAPPV (180 aa)). 414 to 421 (GETGSGKT) is a binding site for ATP. Residues 516-519 (DEAH) carry the DEAH box motif. Residues 675–858 (DIDFSVQVID…SIVLQMKSMA (184 aa)) enclose the Helicase C-terminal domain. Disordered stretches follow at residues 693-720 (RYEE…EVLT) and 955-976 (PNPD…PGMD). Over residues 695–719 (EEDEGNSGNGEDEEDEEEEGFEEVL) the composition is skewed to acidic residues.

This sequence belongs to the DEAD box helicase family. DEAH subfamily. In terms of assembly, interacts with snoRNA U3. Component of the ribosomal small subunit (SSU) processome composed of at least 40 protein subunits and snoRNA U3.

It localises to the nucleus. Its subcellular location is the nucleolus. The catalysed reaction is ATP + H2O = ADP + phosphate + H(+). Its function is as follows. Probable ATP-binding RNA helicase. Required for 18S rRNA synthesis. May play a role in restructuring of the pre-rRNA. The polypeptide is Probable ATP-dependent RNA helicase DHR1 (ECM16) (Saccharomyces cerevisiae (strain ATCC 204508 / S288c) (Baker's yeast)).